The primary structure comprises 215 residues: ATP-dependent dethiobiotin synthetase BioD (215 aa).

13–18 lines the ATP pocket; the sequence is DIGKTV. Thr-17 provides a ligand contact to Mg(2+). The active site involves Lys-38. Thr-42 is a substrate binding site. Residues Asp-50, 115–118, and 175–176 contribute to the ATP site; these read EGAG and NH. Residues Asp-50 and Glu-115 each coordinate Mg(2+).

Belongs to the dethiobiotin synthetase family. In terms of assembly, homodimer. Mg(2+) is required as a cofactor.

The protein resides in the cytoplasm. It carries out the reaction (7R,8S)-7,8-diammoniononanoate + CO2 + ATP = (4R,5S)-dethiobiotin + ADP + phosphate + 3 H(+). It functions in the pathway cofactor biosynthesis; biotin biosynthesis; biotin from 7,8-diaminononanoate: step 1/2. Its function is as follows. Catalyzes a mechanistically unusual reaction, the ATP-dependent insertion of CO2 between the N7 and N8 nitrogen atoms of 7,8-diaminopelargonic acid (DAPA, also called 7,8-diammoniononanoate) to form a ureido ring. The chain is ATP-dependent dethiobiotin synthetase BioD from Neisseria meningitidis serogroup C (strain 053442).